The primary structure comprises 270 residues: Phosphatidylglycerol--prolipoprotein diacylglyceryl transferase (270 aa).

Transmembrane regions (helical) follow at residues 19-39 (FPVYWYGIIIGTGVLLGLWLA), 56-76 (LVLIAVPIAILFARMYYVIFE), 92-112 (QGGLAIHGGLIGAVITGVLFA), and 116-136 (GVSFWKLADIAAPSILLGQAI). Position 138 (Arg-138) interacts with a 1,2-diacyl-sn-glycero-3-phospho-(1'-sn-glycerol). 3 helical membrane-spanning segments follow: residues 178-198 (HPTFLYESLWNFAGVILLLAL), 206-226 (GELFFTYLIWYSVGRFFVEGL), and 236-256 (LRIAQVMSIGLVVISIIFIIV).

The protein belongs to the Lgt family.

It localises to the cell membrane. The enzyme catalyses L-cysteinyl-[prolipoprotein] + a 1,2-diacyl-sn-glycero-3-phospho-(1'-sn-glycerol) = an S-1,2-diacyl-sn-glyceryl-L-cysteinyl-[prolipoprotein] + sn-glycerol 1-phosphate + H(+). The protein operates within protein modification; lipoprotein biosynthesis (diacylglyceryl transfer). Its function is as follows. Catalyzes the transfer of the diacylglyceryl group from phosphatidylglycerol to the sulfhydryl group of the N-terminal cysteine of a prolipoprotein, the first step in the formation of mature lipoproteins. This chain is Phosphatidylglycerol--prolipoprotein diacylglyceryl transferase, found in Bacillus cereus (strain B4264).